The primary structure comprises 596 residues: Chitooligosaccharidolytic beta-N-acetylglucosaminidase (596 aa).

Residues 1-23 form the signal peptide; the sequence is MWLQAICIYTVFIIIGCGIPTAA. N-linked (GlcNAc...) asparagine glycosylation is found at Asn-166, Asn-264, and Asn-377.

Belongs to the glycosyl hydrolase 20 family.

It catalyses the reaction Hydrolysis of terminal non-reducing N-acetyl-D-hexosamine residues in N-acetyl-beta-D-hexosaminides.. In terms of biological role, active during metamorphosis to degrade chitin. The chain is Chitooligosaccharidolytic beta-N-acetylglucosaminidase from Bombyx mori (Silk moth).